A 1388-amino-acid chain; its full sequence is ABC transporter G family member 52 (1388 aa).

The interval 1 to 24 is disordered; that stretch reads MDDAGEICSFSRSSSSAREDDEED. The region spanning 135-406 is the ABC transporter 1 domain; it reads TNALCITKKI…FKSVGFKCPE (272 aa). An ATP-binding site is contributed by 168–175; the sequence is GPPGSGKT. The 214-residue stretch at 484–697 folds into the ABC transmembrane type-2 1 domain; sequence ELLKANIYRE…ALNALAVNEF (214 aa). The next 7 helical transmembrane spans lie at 503-523, 541-561, 590-610, 621-641, 646-666, 675-695, and 732-752; these read LYIF…TVFI, ALFY…GPAI, IPIS…VIGF, FLVL…IVAL, VIAS…CGFI, WWIW…LAVN, and ISIG…TICL. Residues 791–1043 form the ABC transporter 2 domain; it reads ITFEDIRYSV…ELIKYFEAIQ (253 aa). 836-843 provides a ligand contact to ATP; sequence GVSGAGKT. The ABC transmembrane type-2 2 domain occupies 1116 to 1330; it reads TQWLACLWKQ…TLNGLLTSQF (215 aa). 7 helical membrane passes run 1136 to 1156, 1167 to 1183, 1223 to 1243, 1250 to 1270, 1280 to 1300, 1305 to 1325, and 1357 to 1377; these read IVVR…MFWG, LFSI…AMGV, FPYI…MVGY, FLWY…YGMM, MSAV…GFLI, IPVW…LNGL, and LLWV…FLFG.

It belongs to the ABC transporter superfamily. ABCG family. PDR (TC 3.A.1.205) subfamily.

The protein resides in the membrane. May be a general defense protein. In Oryza sativa subsp. japonica (Rice), this protein is ABC transporter G family member 52.